The chain runs to 584 residues: 2-succinyl-5-enolpyruvyl-6-hydroxy-3-cyclohexene-1-carboxylate synthase (584 aa).

Belongs to the TPP enzyme family. MenD subfamily. As to quaternary structure, homodimer. Requires Mg(2+) as cofactor. The cofactor is Mn(2+). Thiamine diphosphate serves as cofactor.

It catalyses the reaction isochorismate + 2-oxoglutarate + H(+) = 5-enolpyruvoyl-6-hydroxy-2-succinyl-cyclohex-3-ene-1-carboxylate + CO2. Its pathway is quinol/quinone metabolism; 1,4-dihydroxy-2-naphthoate biosynthesis; 1,4-dihydroxy-2-naphthoate from chorismate: step 2/7. It participates in quinol/quinone metabolism; menaquinone biosynthesis. Functionally, catalyzes the thiamine diphosphate-dependent decarboxylation of 2-oxoglutarate and the subsequent addition of the resulting succinic semialdehyde-thiamine pyrophosphate anion to isochorismate to yield 2-succinyl-5-enolpyruvyl-6-hydroxy-3-cyclohexene-1-carboxylate (SEPHCHC). The protein is 2-succinyl-5-enolpyruvyl-6-hydroxy-3-cyclohexene-1-carboxylate synthase of Bacillus thuringiensis (strain Al Hakam).